Consider the following 526-residue polypeptide: Flavonoid 3'-monooxygenase CYP75B3 (526 aa).

Residues 6–26 form a helical membrane-spanning segment; sequence LPLLLGSLAVSAAVWYLVYFL. C461 contacts heme.

Belongs to the cytochrome P450 family. The cofactor is heme.

It is found in the membrane. It carries out the reaction a 3'-unsubstituted flavone + reduced [NADPH--hemoprotein reductase] + O2 = a 3'-hydroxyflavone + oxidized [NADPH--hemoprotein reductase] + H2O + H(+). Its pathway is secondary metabolite biosynthesis; flavonoid biosynthesis. Functionally, catalyzes the 3'-hydroxylation of the flavonoid B-ring to the 3',4'-hydroxylated state. Catalyzes the 3'-hydroxylation of apigenin to generate luteolin. The polypeptide is Flavonoid 3'-monooxygenase CYP75B3 (Oryza sativa subsp. japonica (Rice)).